We begin with the raw amino-acid sequence, 247 residues long: Cell division protein ZapD (247 aa).

The protein belongs to the ZapD family. As to quaternary structure, interacts with FtsZ.

Its subcellular location is the cytoplasm. Functionally, cell division factor that enhances FtsZ-ring assembly. Directly interacts with FtsZ and promotes bundling of FtsZ protofilaments, with a reduction in FtsZ GTPase activity. In Escherichia coli O139:H28 (strain E24377A / ETEC), this protein is Cell division protein ZapD.